Here is a 240-residue protein sequence, read N- to C-terminus: LexA repressor (240 aa).

The segment at residues 26 to 46 (FDEMKDALDLASKSGIHRLIT) is a DNA-binding region (H-T-H motif). The segment at 78–113 (QPRRGFSPSVIEGSLGKPQPVQPPAPAKPANDENNS) is disordered. Residues serine 160 and lysine 198 each act as for autocatalytic cleavage activity in the active site.

Belongs to the peptidase S24 family. As to quaternary structure, homodimer.

It carries out the reaction Hydrolysis of Ala-|-Gly bond in repressor LexA.. Represses a number of genes involved in the response to DNA damage (SOS response), including recA and lexA. In the presence of single-stranded DNA, RecA interacts with LexA causing an autocatalytic cleavage which disrupts the DNA-binding part of LexA, leading to derepression of the SOS regulon and eventually DNA repair. The polypeptide is LexA repressor (Rhizobium rhizogenes (strain K84 / ATCC BAA-868) (Agrobacterium radiobacter)).